The primary structure comprises 161 residues: Cyclic pyranopterin monophosphate synthase (161 aa).

Residues 75–77 (LCH) and 113–114 (ME) each bind substrate. D128 is a catalytic residue.

Belongs to the MoaC family. Homohexamer; trimer of dimers.

The enzyme catalyses (8S)-3',8-cyclo-7,8-dihydroguanosine 5'-triphosphate = cyclic pyranopterin phosphate + diphosphate. Its pathway is cofactor biosynthesis; molybdopterin biosynthesis. Its function is as follows. Catalyzes the conversion of (8S)-3',8-cyclo-7,8-dihydroguanosine 5'-triphosphate to cyclic pyranopterin monophosphate (cPMP). The polypeptide is Cyclic pyranopterin monophosphate synthase (Cronobacter sakazakii (strain ATCC BAA-894) (Enterobacter sakazakii)).